We begin with the raw amino-acid sequence, 101 residues long: DNA-binding protein Fis (101 aa).

A DNA-binding region (H-T-H motif) is located at residues 77–96 (QTRAANMLGINRGTLRKKLK).

It belongs to the transcriptional regulatory Fis family. Homodimer.

Its function is as follows. Activates ribosomal RNA transcription. Plays a direct role in upstream activation of rRNA promoters. The protein is DNA-binding protein Fis of Shewanella loihica (strain ATCC BAA-1088 / PV-4).